The chain runs to 254 residues: Small ribosomal subunit protein uS2 (254 aa).

It belongs to the universal ribosomal protein uS2 family.

The polypeptide is Small ribosomal subunit protein uS2 (Oceanobacillus iheyensis (strain DSM 14371 / CIP 107618 / JCM 11309 / KCTC 3954 / HTE831)).